The primary structure comprises 830 residues: uncharacterized protein (830 aa).

3 disordered regions span residues 1–28, 70–147, and 186–210; these read MGVQLKLDPNSKNWLRQPDQQPIQDSIC, RRAN…GNFA, and AASPTVSFSPASTSENLTPTSSKSL. A compositionally biased stretch (polar residues) spans 10–27; sequence NSKNWLRQPDQQPIQDSI. Low complexity-rich tracts occupy residues 100-130 and 186-199; these read QKSSNSRKSIRSQSRSRSSSVGSDSQASIQS and AASPTVSFSPASTS. The span at 200–210 shows a compositional bias: polar residues; sequence ENLTPTSSKSL. The next 10 membrane-spanning stretches (helical) occupy residues 505 to 525, 529 to 549, 551 to 571, 584 to 604, 622 to 642, 659 to 679, 691 to 711, 715 to 735, 740 to 760, and 802 to 822; these read WLVAFMHGVASASILPVVYGG, DMLIGFVLGLLLGIFRVYINP, FFLFDSLFEVIISIILSFLGR, FCFAALVEGAITLILPGYVVF, MLYAVIFSLFLSFGITIGSAL, IIAVSPYWYILLIPIFTLSLL, IQMFVACCGYVVYYFSSLHFG, ISSAIGSFAVGCLGNMYSHFI, FAVVLPAIFVLVPSGFAAQGG, and IAIGIAIGFLASSLTVYPFFG.

This sequence belongs to the ThrE exporter (TC 2.A.79) family.

It is found in the cell membrane. Its subcellular location is the cell tip. This is an uncharacterized protein from Schizosaccharomyces pombe (strain 972 / ATCC 24843) (Fission yeast).